Consider the following 166-residue polypeptide: 6,7-dimethyl-8-ribityllumazine synthase (166 aa).

Residues F24, 58-60 (ALE), and 82-84 (AVV) contribute to the 5-amino-6-(D-ribitylamino)uracil site. 87–88 (ET) is a binding site for (2S)-2-hydroxy-3-oxobutyl phosphate. H90 serves as the catalytic Proton donor. N115 serves as a coordination point for 5-amino-6-(D-ribitylamino)uracil. R129 is a (2S)-2-hydroxy-3-oxobutyl phosphate binding site.

This sequence belongs to the DMRL synthase family.

It catalyses the reaction (2S)-2-hydroxy-3-oxobutyl phosphate + 5-amino-6-(D-ribitylamino)uracil = 6,7-dimethyl-8-(1-D-ribityl)lumazine + phosphate + 2 H2O + H(+). Its pathway is cofactor biosynthesis; riboflavin biosynthesis; riboflavin from 2-hydroxy-3-oxobutyl phosphate and 5-amino-6-(D-ribitylamino)uracil: step 1/2. Catalyzes the formation of 6,7-dimethyl-8-ribityllumazine by condensation of 5-amino-6-(D-ribitylamino)uracil with 3,4-dihydroxy-2-butanone 4-phosphate. This is the penultimate step in the biosynthesis of riboflavin. The chain is 6,7-dimethyl-8-ribityllumazine synthase from Cupriavidus necator (strain ATCC 17699 / DSM 428 / KCTC 22496 / NCIMB 10442 / H16 / Stanier 337) (Ralstonia eutropha).